A 477-amino-acid chain; its full sequence is Aspartyl/glutamyl-tRNA(Asn/Gln) amidotransferase subunit B (477 aa).

This sequence belongs to the GatB/GatE family. GatB subfamily. Heterotrimer of A, B and C subunits.

It carries out the reaction L-glutamyl-tRNA(Gln) + L-glutamine + ATP + H2O = L-glutaminyl-tRNA(Gln) + L-glutamate + ADP + phosphate + H(+). It catalyses the reaction L-aspartyl-tRNA(Asn) + L-glutamine + ATP + H2O = L-asparaginyl-tRNA(Asn) + L-glutamate + ADP + phosphate + 2 H(+). Functionally, allows the formation of correctly charged Asn-tRNA(Asn) or Gln-tRNA(Gln) through the transamidation of misacylated Asp-tRNA(Asn) or Glu-tRNA(Gln) in organisms which lack either or both of asparaginyl-tRNA or glutaminyl-tRNA synthetases. The reaction takes place in the presence of glutamine and ATP through an activated phospho-Asp-tRNA(Asn) or phospho-Glu-tRNA(Gln). The protein is Aspartyl/glutamyl-tRNA(Asn/Gln) amidotransferase subunit B of Legionella pneumophila (strain Corby).